The sequence spans 518 residues: Glutamate--cysteine ligase (518 aa).

Belongs to the glutamate--cysteine ligase type 1 family. Type 1 subfamily.

The catalysed reaction is L-cysteine + L-glutamate + ATP = gamma-L-glutamyl-L-cysteine + ADP + phosphate + H(+). It functions in the pathway sulfur metabolism; glutathione biosynthesis; glutathione from L-cysteine and L-glutamate: step 1/2. The sequence is that of Glutamate--cysteine ligase (gshA) from Buchnera aphidicola subsp. Acyrthosiphon pisum (strain APS) (Acyrthosiphon pisum symbiotic bacterium).